The sequence spans 315 residues: Methionyl-tRNA formyltransferase (315 aa).

113 to 116 (SLLP) is a (6S)-5,6,7,8-tetrahydrofolate binding site.

It belongs to the Fmt family.

The enzyme catalyses L-methionyl-tRNA(fMet) + (6R)-10-formyltetrahydrofolate = N-formyl-L-methionyl-tRNA(fMet) + (6S)-5,6,7,8-tetrahydrofolate + H(+). Its function is as follows. Attaches a formyl group to the free amino group of methionyl-tRNA(fMet). The formyl group appears to play a dual role in the initiator identity of N-formylmethionyl-tRNA by promoting its recognition by IF2 and preventing the misappropriation of this tRNA by the elongation apparatus. The sequence is that of Methionyl-tRNA formyltransferase from Edwardsiella ictaluri (strain 93-146).